Consider the following 448-residue polypeptide: Mitochondrial distribution and morphology protein 10 (448 aa).

Disordered stretches follow at residues 101–126 (QIHP…SEKA) and 366–386 (PPLP…PAGE). Basic and acidic residues predominate over residues 112 to 126 (NESRHAEPNERSEKA).

Belongs to the MDM10 family. As to quaternary structure, component of the ER-mitochondria encounter structure (ERMES) or MDM complex, composed of MMM1, MDM10, MDM12 and MDM34. Associates with the mitochondrial outer membrane sorting assembly machinery SAM(core) complex.

The protein resides in the mitochondrion outer membrane. Its function is as follows. Component of the ERMES/MDM complex, which serves as a molecular tether to connect the endoplasmic reticulum and mitochondria. Components of this complex are involved in the control of mitochondrial shape and protein biogenesis and may function in phospholipid exchange. MDM10 is involved in the late assembly steps of the general translocase of the mitochondrial outer membrane (TOM complex). Functions in the TOM40-specific route of the assembly of outer membrane beta-barrel proteins, including the association of TOM40 with the receptor TOM22 and small TOM proteins. Can associate with the SAM(core) complex as well as the MDM12-MMM1 complex, both involved in late steps of the major beta-barrel assembly pathway, that is responsible for biogenesis of all outer membrane beta-barrel proteins. May act as a switch that shuttles between both complexes and channels precursor proteins into the TOM40-specific pathway. Plays a role in mitochondrial morphology and in the inheritance of mitochondria. The chain is Mitochondrial distribution and morphology protein 10 from Coccidioides immitis (strain RS) (Valley fever fungus).